We begin with the raw amino-acid sequence, 504 residues long: Maturase K (504 aa).

It belongs to the intron maturase 2 family. MatK subfamily.

The protein resides in the plastid. The protein localises to the chloroplast. Its function is as follows. Usually encoded in the trnK tRNA gene intron. Probably assists in splicing its own and other chloroplast group II introns. The protein is Maturase K of Cardamine amara (Large bitter-cress).